Here is a 301-residue protein sequence, read N- to C-terminus: Troponin T, cardiac muscle (301 aa).

Acidic residues predominate over residues 1-72 (MSDAEEVVEE…EAKDAEEGPV (72 aa)). Disordered regions lie at residues 1–97 (MSDA…DGER) and 125–224 (NRKK…KKKI). S2 bears the N-acetylserine mark. A Phosphoserine; by CK2 modification is found at S2. 2 stretches are compositionally biased toward basic and acidic residues: residues 125–186 (NRKK…DEAR) and 206–224 (QTER…KKKI). T207 is subject to Phosphothreonine; by PKC/PRKCA. Residue S211 is modified to Phosphoserine; by PKC/PRKCA. T216 is subject to Phosphothreonine; by PKC/PRKCA and RAF1. Residue T297 is modified to Phosphothreonine; by PKC/PRKCA.

It belongs to the troponin T family. In terms of processing, phosphorylation at Thr-216 by PRKCA induces significant reduction in myofilament calcium sensitivity and actomyosin ATPase activity.

Its function is as follows. Troponin T is the tropomyosin-binding subunit of troponin, the thin filament regulatory complex which confers calcium-sensitivity to striated muscle actomyosin ATPase activity. The protein is Troponin T, cardiac muscle (Tnnt2) of Mus musculus (Mouse).